The sequence spans 114 residues: Large ribosomal subunit protein bL19 (114 aa).

It belongs to the bacterial ribosomal protein bL19 family.

Its function is as follows. This protein is located at the 30S-50S ribosomal subunit interface and may play a role in the structure and function of the aminoacyl-tRNA binding site. The polypeptide is Large ribosomal subunit protein bL19 (Clavibacter michiganensis subsp. michiganensis (strain NCPPB 382)).